Reading from the N-terminus, the 117-residue chain is MATKQGTPKVFHKMHVKTGDTVQVIAGKDKGKIGEIVQALPQLSKVIVKGVNIKTKHVKPQQEGESGRIVTQEFPIHSSNVMLYSTKQNVASRVCYTFTSEGKKVRKLKKTGEILDK.

It belongs to the universal ribosomal protein uL24 family. Part of the 50S ribosomal subunit.

One of two assembly initiator proteins, it binds directly to the 5'-end of the 23S rRNA, where it nucleates assembly of the 50S subunit. Functionally, one of the proteins that surrounds the polypeptide exit tunnel on the outside of the subunit. This chain is Large ribosomal subunit protein uL24, found in Nostoc punctiforme (strain ATCC 29133 / PCC 73102).